We begin with the raw amino-acid sequence, 794 residues long: Protein SEY1 (794 aa).

Residues 1–687 (MMEVIDSVLG…KRSIIKTTTA (687 aa)) lie on the Cytoplasmic side of the membrane. The GB1/RHD3-type G domain maps to 43 to 272 (GLDYHVISVF…ANPYYFKPQY (230 aa)). Residue 53 to 60 (GSQSSGKS) coordinates GTP. Residues 331–352 (VDHILDDREKLGEVLKNLKQEC) adopt a coiled-coil conformation. The helical transmembrane segment at 688–708 (IPIWMYLLVVALGWNEFVMVL) threads the bilayer. Residues 709–711 (RNP) lie on the Lumenal side of the membrane. A helical membrane pass occupies residues 712–732 (LLVTLVLLFGVGFIFVNKFGL). Residues 733–794 (WGPVLNVAHN…SDNEKIEKSE (62 aa)) lie on the Cytoplasmic side of the membrane. The segment at 770–794 (NSAGKESYEMKDMSDSDNEKIEKSE) is disordered. A compositionally biased stretch (basic and acidic residues) spans 775 to 794 (ESYEMKDMSDSDNEKIEKSE).

It belongs to the TRAFAC class dynamin-like GTPase superfamily. GB1/RHD3 GTPase family. RHD3 subfamily.

The protein resides in the endoplasmic reticulum membrane. Its function is as follows. Cooperates with the reticulon proteins and tubule-shaping DP1 family proteins to generate and maintain the structure of the tubular endoplasmic reticulum network. Has GTPase activity, which is required for its function in ER organization. In Zygosaccharomyces rouxii (strain ATCC 2623 / CBS 732 / NBRC 1130 / NCYC 568 / NRRL Y-229), this protein is Protein SEY1.